A 142-amino-acid chain; its full sequence is Large ribosomal subunit protein uL11 (142 aa).

It belongs to the universal ribosomal protein uL11 family. In terms of assembly, part of the ribosomal stalk of the 50S ribosomal subunit. Interacts with L10 and the large rRNA to form the base of the stalk. L10 forms an elongated spine to which L12 dimers bind in a sequential fashion forming a multimeric L10(L12)X complex. One or more lysine residues are methylated.

Forms part of the ribosomal stalk which helps the ribosome interact with GTP-bound translation factors. The chain is Large ribosomal subunit protein uL11 from Shewanella baltica (strain OS223).